Here is a 157-residue protein sequence, read N- to C-terminus: uncharacterized protein (157 aa).

The N-acetyltransferase domain occupies 3–157 (FTLEDMTEEE…TNIRMRKQLC (155 aa)).

This sequence belongs to the acetyltransferase family.

This is an uncharacterized protein from Bacillus subtilis (strain 168).